Consider the following 1274-residue polypeptide: RNA-directed RNA polymerase VP2 (1274 aa).

The RdRp catalytic domain maps to 561–798 (LSTTSGSVVT…KLYALMGCRI (238 aa)).

It belongs to the reoviridae RNA-directed RNA polymerase family.

It localises to the virion. The catalysed reaction is RNA(n) + a ribonucleoside 5'-triphosphate = RNA(n+1) + diphosphate. RNA-directed RNA polymerase that is involved in transcription and genome replication. Following infection, it catalyzes the synthesis of fully conservative plus strands. After core assembly, which consists in recruitment of one capped plus-strand for each genomic segments and polymerase complexes, the polymerase switches mode and catalyzes the synthesis of complementary minus-strands. This Aquareovirus C (isolate Golden shiner/USA/GSRV/1977) (AQRV-C) protein is RNA-directed RNA polymerase VP2 (S2).